Reading from the N-terminus, the 862-residue chain is MKTVLMVAEKPSLAQSIAKILSRGSLSSHKGLNGACSVHEYTGTFAGQPVRFKMTSVCGHVMTLDFLGKYNKWDKVDPAELFSQAPTEKKEANPKLNMVKFLQVEGRGCDYIVLWLDCDKEGENICFEVLDAVLPVMNKAHGGEKTVFRARFSSITDTDICNAMACLGEPDHNEALSVDARQELDLRIGCAFTRFQTKYFQGKYGDLDSSLISFGPCQTPTLGFCVERHDKIQSFKPETYWVLQAKVNTDKDRSLLLDWDRVRVFDREIAQMFLNMTKLEKEAQVEATSRKEKAKQRPLALNTVEMLRVASSSLGMGPQHAMQTAERLYTQGYISYPRTETTHYPENFDLKGSLRQQANHPYWADTVKRLLAEGINRPRKGHDAGDHPPITPMKSATEAELGGDAWRLYEYITRHFIATVSHDCKYLQSTISFRIGPELFTCSGKTVLSPGFTEVMPWQSVPLEESLPTCQRGDAFPVGEVKMLEKQTNPPDYLTEAELITLMEKHGIGTDASIPVHINNICQRNYVTVESGRRLKPTNLGIVLVHGYYKIDAELVLPTIRSAVEKQLNLIAQGKADYRQVLGHTLDVFKRKFHYFVDSIAGMDELMEVSFSPLAATGKPLSRCGKCHRFMKYIQAKPSRLHCSHCDETYTLPQNGTIKLYKELRCPLDDFELVLWSSGSRGKSYPLCPYCYNHPPFRDMKKGMGCNECTHPSCQHSLSMLGIGQCVECESGVLVLDPTSGPKWKVACNKCNVVAHCFENAHRVRVSADTCSVCEAALLDVDFNKAKSPLPGDETQHMGCVFCDPVFQELVELKHAASCHPMHRGGPGRRQGRGRGRARRPPGKPNPRRPKDKMSALAAYFV.

The 151-residue stretch at 3-153 (TVLMVAEKPS…EKTVFRARFS (151 aa)) folds into the Toprim domain. Residues 171–593 (DHNEALSVDA…HTLDVFKRKF (423 aa)) form the Topo IA-type catalytic domain. The active-site O-(5'-phospho-DNA)-tyrosine intermediate is tyrosine 336. Residues 821 to 851 (PMHRGGPGRRQGRGRGRARRPPGKPNPRRPK) are compositionally biased toward basic residues. The tract at residues 821–854 (PMHRGGPGRRQGRGRGRARRPPGKPNPRRPKDKM) is disordered.

Belongs to the type IA topoisomerase family. As to expression, isoform 1 is found in testis, heart and skeletal muscle. A 4 kb transcript which probably represents isoform 2 is found in thymus, kidney and pancreas.

The catalysed reaction is ATP-independent breakage of single-stranded DNA, followed by passage and rejoining.. Its function is as follows. Releases the supercoiling and torsional tension of DNA introduced during the DNA replication and transcription by transiently cleaving and rejoining one strand of the DNA duplex. Introduces a single-strand break via transesterification at a target site in duplex DNA. The scissile phosphodiester is attacked by the catalytic tyrosine of the enzyme, resulting in the formation of a DNA-(5'-phosphotyrosyl)-enzyme intermediate and the expulsion of a 3'-OH DNA strand. The free DNA strand than undergoes passage around the unbroken strand thus removing DNA supercoils. Finally, in the religation step, the DNA 3'-OH attacks the covalent intermediate to expel the active-site tyrosine and restore the DNA phosphodiester backbone. Possesses negatively supercoiled DNA relaxing activity. In Homo sapiens (Human), this protein is DNA topoisomerase 3-beta-1 (TOP3B).